We begin with the raw amino-acid sequence, 120 residues long: Large ribosomal subunit protein uL18 (120 aa).

This sequence belongs to the universal ribosomal protein uL18 family. As to quaternary structure, part of the 50S ribosomal subunit; part of the 5S rRNA/L5/L18/L25 subcomplex. Contacts the 5S and 23S rRNAs.

This is one of the proteins that bind and probably mediate the attachment of the 5S RNA into the large ribosomal subunit, where it forms part of the central protuberance. The sequence is that of Large ribosomal subunit protein uL18 from Janthinobacterium sp. (strain Marseille) (Minibacterium massiliensis).